A 122-amino-acid polypeptide reads, in one-letter code: Large ribosomal subunit protein uL14 (122 aa).

The protein belongs to the universal ribosomal protein uL14 family. In terms of assembly, part of the 50S ribosomal subunit. Forms a cluster with proteins L3 and L19. In the 70S ribosome, L14 and L19 interact and together make contacts with the 16S rRNA in bridges B5 and B8.

Its function is as follows. Binds to 23S rRNA. Forms part of two intersubunit bridges in the 70S ribosome. The sequence is that of Large ribosomal subunit protein uL14 from Gloeothece citriformis (strain PCC 7424) (Cyanothece sp. (strain PCC 7424)).